Consider the following 1616-residue polypeptide: MFPLIGKTIIFDNFPDPSDTWEITETIGKGTYGKVFKVLNKKNGQKAAVKILDPIHDIDEEIEAEYNILKALSDHPNVVRFYGIYFKKDKVNGDKLWLVLELCSGGSVTDLVKGFLKRGERMSEPLIAYILHEALMGLQHLHNNKTIHRDVKGNNILLTTEGGVKLVDFGVSAQLTSTRHRRNTSVGTPFWMAPEVIACEQQLDTTYDARCDTWSLGITAIELGDGDPPLADLHPMRALFKIPRNPPPKLRQPELWSAEFNDFISKCLTKDYEKRPTVSELLQHKFITQIEGKDVMLQKQLTEFIGIHQCMGGTEKARRERIHTKKGNFNRPLISNLKDVDDLATLEILDENTVSEQLEKCYSRDQIYVYVGDILIALNPFQSLGLYSTKHSKLYIGSKRTASPPHIFAMADLGYQSMITYNSDQCIVISGESGAGKTENAHLLVQQLTVLGKANNRTLQEKILQVNNLVEAFGNACTIINDNSSRFGKYLEMKFTSSGAVVGAQISEYLLEKSRVIHQAIGEKNFHIFYYIYAGLAEKKKLAHYKLPENKPPRYLQNDHLRTVQDIMNNSFYKSQYELIEQCFKVIGFTMEQLGSIYSILAAILNVGNIEFSSVATEHQIDKSHISNHTALENCASLLCIRADELQEALTSHCVVTRGETIIRPNTVEKATDVRDAMAKTLYGRLFSWIVNCINSLLKHDSSPSGNGDELSIGILDIFGFENFKKNSFEQLCINIANEQIQYYYNQHVFAWEQNEYLNEDVDARVIEYEDNWPLLDMFLQKPMGLLSLLDEESRFPKATDQTLVEKFEGNLKSQYFWRPKRMELSFGIHHYAGKVLYNASGFLAKNRDTLPTDIVLLLRSSDNSVIRQLVNHPLTKTGNLPHSKTKNVINYQMRTSEKLINLAKGDTGEATRHARETTNMKTQTVASYFRYSLMDLLSKMVVGQPHFVRCIKPNSERQARKYDKEKVLLQLRYTGILETARIRRLGFSHRILFANFIKRYYLLCYKSSEEPRMSPDTCATILEKAGLDNWALGKTKVFLKYYHVEQLNLMRKEAIDKLILIQACVRAFLCSRRYQKIQEKRKESAIIIQSAARGHLVRKQRKEIVDMKNTAVTTIQTSDQEFDYKKNFENTRESFVKKQAENAISANERFISAPNNKGSVSVVKTSTFKPEEETTNAVESNNRVYQTPKKMNNVYEEEVKQEFYLVGPEVSPKQKSVKDLEENSNLRKVEKEEAMIQSYYQRYTEERNCEESKAAYLERKAISERPSYPVPWLAENETSFKKTLEPTLSQRSIYQNANSMEKEKKTSVVTQRAPICSQEEGRGRLRHETVKERQVEPVTQAQEEEDKAAVFIQSKYRGYKRRQQLRKDKMSSFKHQRIVTTPTEVARNTHNLYSYPTKHEEINNIKKKDNKDSKATSEREACGLAIFSKQISKLSEEYFILQKKLNEMILSQQLKSLYLGVSHHKPINRRVSSQQCLSGVCKGEEPKILRPPRRPRKPKTLNNPEDSTYYYLLHKSIQEEKRRPRKDSQGKLLDLEDFYYKEFLPSRSGPKEHSPSLRERRPQQELQNQCIKANERCWAAESPEKEEEREPAANPYDFRRLLRKTSQRRRLVQQS.

A Protein kinase domain is found at 21-287 (WEITETIGKG…VSELLQHKFI (267 aa)). ATP is bound by residues 27–35 (IGKGTYGKV) and lysine 50. Aspartate 150 functions as the Proton acceptor in the catalytic mechanism. The Myosin motor domain maps to 338-1053 (KDVDDLATLE…HVEQLNLMRK (716 aa)). The segment at 934 to 956 (LMDLLSKMVVGQPHFVRCIKPNS) is actin-binding. 3 IQ domains span residues 1055–1084 (AIDKLILIQACVRAFLCSRRYQKIQEKRKE), 1082–1111 (RKESAIIIQSAARGHLVRKQRKEIVDMKNT), and 1346–1375 (EDKAAVFIQSKYRGYKRRQQLRKDKMSSFK). Residues 1401–1479 (EEINNIKKKD…RRVSSQQCLS (79 aa)) are interaction with MORN4. Disordered regions lie at residues 1545–1567 (LPSRSGPKEHSPSLRERRPQQEL) and 1581–1616 (AESPEKEEEREPAANPYDFRRLLRKTSQRRRLVQQS). Basic and acidic residues-rich tracts occupy residues 1550 to 1564 (GPKEHSPSLRERRPQ) and 1583 to 1592 (SPEKEEEREP). A compositionally biased stretch (basic residues) spans 1602 to 1616 (LLRKTSQRRRLVQQS).

In the C-terminal section; belongs to the TRAFAC class myosin-kinesin ATPase superfamily. Myosin family. The protein in the N-terminal section; belongs to the protein kinase superfamily. STE Ser/Thr protein kinase family. In terms of assembly, interacts with MORN4. Interacts (via C-terminus) with ESPN and ESPNL. In terms of tissue distribution, strongest expression in retina, retinal pigment epithelial cells, cochlea and pancreas.

The protein localises to the cytoplasm. It is found in the cytoskeleton. The protein resides in the cell projection. Its subcellular location is the filopodium tip. It localises to the stereocilium. The enzyme catalyses L-seryl-[protein] + ATP = O-phospho-L-seryl-[protein] + ADP + H(+). It catalyses the reaction L-threonyl-[protein] + ATP = O-phospho-L-threonyl-[protein] + ADP + H(+). It carries out the reaction ATP + H2O = ADP + phosphate + H(+). Functionally, actin-dependent motor protein with a protein kinase activity, playing an essential role in hearing. Probably also plays a role in vision. Required for normal cochlear hair bundle development and hearing. Plays an important role in the early steps of cochlear hair bundle morphogenesis. Influences the number and lengths of stereocilia to be produced and limits the growth of microvilli within the forming auditory hair bundles thereby contributing to the architecture of the hair bundle, including its staircase pattern. Involved in the elongation of actin in stereocilia tips by transporting the actin regulatory factor ESPN to the plus ends of actin filaments. This chain is Myosin-IIIa (MYO3A), found in Homo sapiens (Human).